The primary structure comprises 134 residues: Arsenate reductase 1 (134 aa).

Catalysis depends on nucleophile residues cysteine 11, cysteine 83, and cysteine 90. Cystine bridges form between cysteine 11-cysteine 83 and cysteine 83-cysteine 90.

The protein belongs to the low molecular weight phosphotyrosine protein phosphatase family. Thioredoxin-coupled ArsC subfamily.

It is found in the cytoplasm. It catalyses the reaction arsenate + [thioredoxin]-dithiol + H(+) = arsenite + [thioredoxin]-disulfide + H2O. Catalyzes the reduction of arsenate [As(V)] to arsenite [As(III)]. This chain is Arsenate reductase 1, found in Bacillus cereus (strain ATCC 10987 / NRS 248).